Consider the following 396-residue polypeptide: Multidrug efflux protein YfmO (396 aa).

The next 12 membrane-spanning stretches (helical) occupy residues Val-20–Ile-40, Ser-56–Ile-76, Ile-80–Gly-100, Gly-114–Val-134, Ala-142–Gly-162, Ala-171–Leu-191, Gly-214–Ala-234, Tyr-249–Val-269, Ser-278–Asp-298, Thr-301–Met-321, Ala-339–Ser-359, and Ala-364–Met-384.

It belongs to the major facilitator superfamily.

Its subcellular location is the cell membrane. Its function is as follows. Acts to efflux copper or a copper complex. It is possible that YfmO could contribute to copper resistance. The protein is Multidrug efflux protein YfmO (yfmO) of Bacillus subtilis (strain 168).